The following is a 266-amino-acid chain: Glucosamine-6-phosphate deaminase (266 aa).

Residue Asp72 is the Proton acceptor; for enolization step of the active site. The active-site For ring-opening step is Asp141. Catalysis depends on His143, which acts as the Proton acceptor; for ring-opening step. The active-site For ring-opening step is the Glu148.

The protein belongs to the glucosamine/galactosamine-6-phosphate isomerase family. NagB subfamily. In terms of assembly, homohexamer.

The enzyme catalyses alpha-D-glucosamine 6-phosphate + H2O = beta-D-fructose 6-phosphate + NH4(+). It functions in the pathway amino-sugar metabolism; N-acetylneuraminate degradation; D-fructose 6-phosphate from N-acetylneuraminate: step 5/5. With respect to regulation, allosterically activated by N-acetylglucosamine 6-phosphate (GlcNAc6P). Its function is as follows. Catalyzes the reversible isomerization-deamination of glucosamine 6-phosphate (GlcN6P) to form fructose 6-phosphate (Fru6P) and ammonium ion. This chain is Glucosamine-6-phosphate deaminase, found in Salmonella arizonae (strain ATCC BAA-731 / CDC346-86 / RSK2980).